Consider the following 605-residue polypeptide: Elongation factor 4 (605 aa).

One can recognise a tr-type G domain in the interval Lys-11–Thr-193. Residues Asp-23 to Thr-28 and Asn-140 to Asp-143 each bind GTP.

The protein belongs to the TRAFAC class translation factor GTPase superfamily. Classic translation factor GTPase family. LepA subfamily.

It is found in the cell inner membrane. The enzyme catalyses GTP + H2O = GDP + phosphate + H(+). Functionally, required for accurate and efficient protein synthesis under certain stress conditions. May act as a fidelity factor of the translation reaction, by catalyzing a one-codon backward translocation of tRNAs on improperly translocated ribosomes. Back-translocation proceeds from a post-translocation (POST) complex to a pre-translocation (PRE) complex, thus giving elongation factor G a second chance to translocate the tRNAs correctly. Binds to ribosomes in a GTP-dependent manner. The protein is Elongation factor 4 of Acinetobacter baumannii (strain AB307-0294).